The sequence spans 325 residues: Protein UL76 (325 aa).

The segment at 222 to 286 (ARASAVAGGR…VRGGGAVEPA (65 aa)) is disordered. The segment covering 247–258 (GPGAQTVSASGA) has biased composition (low complexity).

The protein belongs to the herpesviridae UL24 family.

The protein localises to the virion. It is found in the host cytoplasm. Its subcellular location is the host nucleus. The protein resides in the host nucleolus. It localises to the host Golgi apparatus. Functionally, may participate in nuclear egress of viral particles. Plays a role in the dispersal of several host nucleolar proteins including NCL/nucleolin and NPM1. Since deletion of host NCL/nucleolin negatively impact on nuclear egress, UL76 supposedly acts on this process through its effect on host nucleoli. Induces cell cycle arrest in host cells at the G2/M phase following by apoptosis. The mechanism involves the inhibition of host mitotic complex cyclinB/CDK1. In Human cytomegalovirus (strain Merlin) (HHV-5), this protein is Protein UL76 (UL76).